The sequence spans 216 residues: DNA gyrase subunit B (216 aa).

Residues 140–216 (SELYLVEGDS…PDKLRYHKII (77 aa)) enclose the Toprim domain.

The protein belongs to the type II topoisomerase GyrB family. Heterotetramer, composed of two GyrA and two GyrB chains. In the heterotetramer, GyrA contains the active site tyrosine that forms a transient covalent intermediate with DNA, while GyrB binds cofactors and catalyzes ATP hydrolysis.

Its subcellular location is the cytoplasm. The catalysed reaction is ATP-dependent breakage, passage and rejoining of double-stranded DNA.. Functionally, a type II topoisomerase that negatively supercoils closed circular double-stranded (ds) DNA in an ATP-dependent manner to modulate DNA topology and maintain chromosomes in an underwound state. Negative supercoiling favors strand separation, and DNA replication, transcription, recombination and repair, all of which involve strand separation. Also able to catalyze the interconversion of other topological isomers of dsDNA rings, including catenanes and knotted rings. Type II topoisomerases break and join 2 DNA strands simultaneously in an ATP-dependent manner. The protein is DNA gyrase subunit B (gyrB) of Acinetobacter sp. (strain ATCC 33308 / BD413 ErpE27).